Consider the following 410-residue polypeptide: D-amino acid dehydrogenase (410 aa).

An FAD-binding site is contributed by 9-14; sequence GGGIVG.

It belongs to the DadA oxidoreductase family. The cofactor is FAD.

It localises to the cell inner membrane. The catalysed reaction is a D-alpha-amino acid + a quinone + H2O = a 2-oxocarboxylate + a quinol + NH4(+). With respect to regulation, activity is markedly inhibited by benzoate, and moderately by SH reagents such as p-hydroxymercuribenzoate, iodoacetamide, and iodoacetate. Functionally, catalyzes the oxidative deamination of D-amino acids. Has broad substrate specificity; is mostly active on D-proline, and to a lesser extent, on several other D-amino acids such as D-alanine, D-phenylalanine and D-serine. Mediates electron transport from D-proline to coenzyme Q1 in vitro, and is involved in the electron transport chain from D-proline to the c-type cytochrome in vivo. The chain is D-amino acid dehydrogenase from Helicobacter pylori (Campylobacter pylori).